The chain runs to 262 residues: Homeobox protein Nkx-6.3 (262 aa).

The segment at residues 140–199 is a DNA-binding region (homeobox); that stretch reads KKHTRPTFTGHQIFALEKTFEQTKYLAGPERARLAYSLGMTESQVKVWFQNRRTKWRKKS. A disordered region spans residues 197-237; the sequence is KKSALEPSSSTPRAPGGASGDRAASENEDDEYNKPLDPDSD.

Expressed in the developing CNS and gastro-intestinal tract.

The protein localises to the nucleus. Putative transcription factor, which may be involved in patterning of central nervous system and pancreas. The polypeptide is Homeobox protein Nkx-6.3 (Nkx6-3) (Mus musculus (Mouse)).